Here is a 265-residue protein sequence, read N- to C-terminus: Leucine-rich repeat-containing protein Bf66946 (265 aa).

The first 20 residues, 1 to 20, serve as a signal peptide directing secretion; the sequence is MALRDIFLLSMAMTAVTVQA. 2 cysteine pairs are disulfide-bonded: Cys-21-Cys-27 and Cys-25-Cys-39. Residues 21–50 enclose the LRRNT domain; the sequence is CPSACKCTVSLYGEMVVACGGMGLTEIPED. LRR repeat units follow at residues 51–75, 76–99, and 100–123; these read IPHR…SFKG, LRNL…ALRH, and LGHL…LFDF. The N-linked (GlcNAc...) asparagine glycan is linked to Asn-64. The region spanning 142–193 is the LRRCT domain; the sequence is NPWGCDCRMAWLAQELAGGSKTFGDRHMECATPAALAGRGLSEIPQTSFVCT. 2 cysteine pairs are disulfide-bonded: Cys-146-Cys-171 and Cys-148-Cys-192. A helical transmembrane segment spans residues 220–240; it reads VAVVFGCITGLVTILLLVLTA.

The protein resides in the cell membrane. Functionally, binds selectively to the Gram-positive bacteria S.aureus and S.pneumoniae. Does not adhere to the Gram-negative bacteria E.coli and S.enterica. Probably recognizes peptidoglycans expressed on the bacterial cell surface. In Branchiostoma floridae (Florida lancelet), this protein is Leucine-rich repeat-containing protein Bf66946.